The chain runs to 189 residues: Ribose 1,5-bisphosphate phosphokinase PhnN (189 aa).

10–17 serves as a coordination point for ATP; that stretch reads GPSGSGKD.

This sequence belongs to the ribose 1,5-bisphosphokinase family.

The catalysed reaction is alpha-D-ribose 1,5-bisphosphate + ATP = 5-phospho-alpha-D-ribose 1-diphosphate + ADP. It participates in metabolic intermediate biosynthesis; 5-phospho-alpha-D-ribose 1-diphosphate biosynthesis; 5-phospho-alpha-D-ribose 1-diphosphate from D-ribose 5-phosphate (route II): step 3/3. In terms of biological role, catalyzes the phosphorylation of ribose 1,5-bisphosphate to 5-phospho-D-ribosyl alpha-1-diphosphate (PRPP). The sequence is that of Ribose 1,5-bisphosphate phosphokinase PhnN from Enterobacter lignolyticus (strain SCF1).